We begin with the raw amino-acid sequence, 319 residues long: Mitochondrial thiamine pyrophosphate carrier 1 (319 aa).

Solcar repeat units follow at residues 12-110 (GQRY…VTQS), 121-207 (PQPA…VRVP), and 214-309 (PFGS…VLKI). 6 helical membrane-spanning segments follow: residues 17–35 (VVAA…VAPL), 91–107 (LLYI…YRTV), 127–147 (FVSG…FDLL), 182–201 (GVSA…FATY), 221–237 (TAGV…VFPL), and 284–301 (GLTV…VTMW).

This sequence belongs to the mitochondrial carrier (TC 2.A.29) family.

It localises to the mitochondrion inner membrane. Its function is as follows. Mitochondrial transporter that mediates uptake of thiamine pyrophosphate (ThPP) into mitochondria. This is Mitochondrial thiamine pyrophosphate carrier 1 (TPC1) from Coccidioides immitis (strain RS) (Valley fever fungus).